A 221-amino-acid polypeptide reads, in one-letter code: 7-cyano-7-deazaguanine synthase (221 aa).

An ATP-binding site is contributed by Phe10–Leu20. Zn(2+)-binding residues include Cys186, Cys195, Cys198, and Cys201.

The protein belongs to the QueC family. In terms of assembly, homodimer. Zn(2+) is required as a cofactor.

The enzyme catalyses 7-carboxy-7-deazaguanine + NH4(+) + ATP = 7-cyano-7-deazaguanine + ADP + phosphate + H2O + H(+). It participates in purine metabolism; 7-cyano-7-deazaguanine biosynthesis. Catalyzes the ATP-dependent conversion of 7-carboxy-7-deazaguanine (CDG) to 7-cyano-7-deazaguanine (preQ(0)). The polypeptide is 7-cyano-7-deazaguanine synthase (Geobacillus thermodenitrificans (strain NG80-2)).